A 436-amino-acid polypeptide reads, in one-letter code: Enolase (436 aa).

(2R)-2-phosphoglycerate is bound at residue glutamine 167. The active-site Proton donor is glutamate 209. Positions 246, 291, and 318 each coordinate Mg(2+). (2R)-2-phosphoglycerate contacts are provided by lysine 343, arginine 372, serine 373, and lysine 394. Lysine 343 acts as the Proton acceptor in catalysis.

This sequence belongs to the enolase family. In terms of assembly, component of the RNA degradosome, a multiprotein complex involved in RNA processing and mRNA degradation. The cofactor is Mg(2+).

It is found in the cytoplasm. The protein resides in the secreted. It localises to the cell surface. It catalyses the reaction (2R)-2-phosphoglycerate = phosphoenolpyruvate + H2O. Its pathway is carbohydrate degradation; glycolysis; pyruvate from D-glyceraldehyde 3-phosphate: step 4/5. Functionally, catalyzes the reversible conversion of 2-phosphoglycerate (2-PG) into phosphoenolpyruvate (PEP). It is essential for the degradation of carbohydrates via glycolysis. This Haemophilus influenzae (strain PittEE) protein is Enolase.